The chain runs to 692 residues: Protein arginine N-methyltransferase 7 (692 aa).

SAM-dependent MTase PRMT-type domains lie at 14-359 (ENSW…YSLW) and 368-692 (AKTV…QEKR).

The protein belongs to the class I-like SAM-binding methyltransferase superfamily. Protein arginine N-methyltransferase family. PRMT7 subfamily.

Essential arginine methyltransferase that can both catalyze the formation of omega-N monomethylarginine (MMA) and symmetrical dimethylarginine (sDMA). Specifically mediates the symmetrical dimethylation of arginine residues in the small nuclear ribonucleoproteins SmD1 and SmD3. The sequence is that of Protein arginine N-methyltransferase 7 (Art7) from Drosophila persimilis (Fruit fly).